Reading from the N-terminus, the 241-residue chain is Ribosome-recycling factor, mitochondrial (241 aa).

The protein belongs to the RRF family.

The protein resides in the mitochondrion. Necessary for protein synthesis in mitochondria. Functions as a ribosome recycling factor in mitochondria. This chain is Ribosome-recycling factor, mitochondrial (RRF1), found in Kluyveromyces lactis (strain ATCC 8585 / CBS 2359 / DSM 70799 / NBRC 1267 / NRRL Y-1140 / WM37) (Yeast).